Consider the following 227-residue polypeptide: Cytochrome c oxidase subunit 2 (227 aa).

The Mitochondrial intermembrane portion of the chain corresponds to 1-14 (MTHPLQLGFQDATS). A helical transmembrane segment spans residues 15-45 (PIMEELLHFHDHTLMIVFLISSLVLYIITLM). Topologically, residues 46–59 (LTTKLTHTSTMDAQ) are mitochondrial matrix. A helical transmembrane segment spans residues 60–87 (EVETVWTILPAIILILIALPSLRILYMM). Topologically, residues 88–227 (DEINNPLLTV…YFEDWSVSMT (140 aa)) are mitochondrial intermembrane. Residues histidine 161, cysteine 196, glutamate 198, cysteine 200, histidine 204, and methionine 207 each contribute to the Cu cation site. Position 198 (glutamate 198) interacts with Mg(2+). Tyrosine 218 is subject to Phosphotyrosine.

Belongs to the cytochrome c oxidase subunit 2 family. Component of the cytochrome c oxidase (complex IV, CIV), a multisubunit enzyme composed of 14 subunits. The complex is composed of a catalytic core of 3 subunits MT-CO1, MT-CO2 and MT-CO3, encoded in the mitochondrial DNA, and 11 supernumerary subunits COX4I, COX5A, COX5B, COX6A, COX6B, COX6C, COX7A, COX7B, COX7C, COX8 and NDUFA4, which are encoded in the nuclear genome. The complex exists as a monomer or a dimer and forms supercomplexes (SCs) in the inner mitochondrial membrane with NADH-ubiquinone oxidoreductase (complex I, CI) and ubiquinol-cytochrome c oxidoreductase (cytochrome b-c1 complex, complex III, CIII), resulting in different assemblies (supercomplex SCI(1)III(2)IV(1) and megacomplex MCI(2)III(2)IV(2)). Found in a complex with TMEM177, COA6, COX18, COX20, SCO1 and SCO2. Interacts with TMEM177 in a COX20-dependent manner. Interacts with COX20. Interacts with COX16. The cofactor is Cu cation.

The protein resides in the mitochondrion inner membrane. It catalyses the reaction 4 Fe(II)-[cytochrome c] + O2 + 8 H(+)(in) = 4 Fe(III)-[cytochrome c] + 2 H2O + 4 H(+)(out). In terms of biological role, component of the cytochrome c oxidase, the last enzyme in the mitochondrial electron transport chain which drives oxidative phosphorylation. The respiratory chain contains 3 multisubunit complexes succinate dehydrogenase (complex II, CII), ubiquinol-cytochrome c oxidoreductase (cytochrome b-c1 complex, complex III, CIII) and cytochrome c oxidase (complex IV, CIV), that cooperate to transfer electrons derived from NADH and succinate to molecular oxygen, creating an electrochemical gradient over the inner membrane that drives transmembrane transport and the ATP synthase. Cytochrome c oxidase is the component of the respiratory chain that catalyzes the reduction of oxygen to water. Electrons originating from reduced cytochrome c in the intermembrane space (IMS) are transferred via the dinuclear copper A center (CU(A)) of subunit 2 and heme A of subunit 1 to the active site in subunit 1, a binuclear center (BNC) formed by heme A3 and copper B (CU(B)). The BNC reduces molecular oxygen to 2 water molecules using 4 electrons from cytochrome c in the IMS and 4 protons from the mitochondrial matrix. The protein is Cytochrome c oxidase subunit 2 (MT-CO2) of Carlito syrichta (Philippine tarsier).